The sequence spans 165 residues: Large ribosomal subunit protein uL30 (165 aa).

It belongs to the universal ribosomal protein uL30 family. As to quaternary structure, part of the 50S ribosomal subunit.

This chain is Large ribosomal subunit protein uL30, found in Thermoplasma volcanium (strain ATCC 51530 / DSM 4299 / JCM 9571 / NBRC 15438 / GSS1).